Here is a 438-residue protein sequence, read N- to C-terminus: Vasoactive intestinal polypeptide receptor 2 (438 aa).

A signal peptide spans Met-1–Pro-23. Topologically, residues Glu-24–Ile-124 are extracellular. Disulfide bonds link Cys-38/Cys-61, Cys-52/Cys-93, and Cys-75/Cys-109. N-linked (GlcNAc...) asparagine glycans are attached at residues Asn-58, Asn-88, and Asn-92. Residues Leu-125–Leu-150 traverse the membrane as a helical segment. The Cytoplasmic segment spans residues Phe-151–Arg-158. A helical transmembrane segment spans residues Asn-159–Asp-180. At Asp-181 to Lys-203 the chain is on the extracellular side. Cys-202 and Cys-271 form a disulfide bridge. A helical transmembrane segment spans residues Leu-204–His-228. The Cytoplasmic portion of the chain corresponds to Thr-229–Arg-239. Residues Cys-240 to Ala-261 traverse the membrane as a helical segment. Topologically, residues Ala-262–Pro-280 are extracellular. A helical transmembrane segment spans residues Trp-281–Arg-304. The Cytoplasmic segment spans residues Ile-305–Arg-325. A helical transmembrane segment spans residues Leu-326–Val-346. At Phe-347–Lys-354 the chain is on the extracellular side. A helical transmembrane segment spans residues Tyr-355–Leu-378. Topologically, residues Asn-379–Ile-438 are cytoplasmic.

This sequence belongs to the G-protein coupled receptor 2 family. Interacts with ADCYAP1/PACAP (via N-terminal extracellular domain); activated by PACAP27 and CAPAC38 neuropeptides. Interacts with VIP; the interaction results in VIPR1 activation. Expressed in CD4+ T-cells, but not in CD8+ T-cells. Expressed in the T-cell lines Jurkat, Peer, MOLT-4, HSB, YT and SUP-T1, but not in the T-cell lines HARRIS and HuT 78.

The protein resides in the cell membrane. In terms of biological role, g protein-coupled receptor activated by the neuropeptides vasoactive intestinal peptide (VIP) and pituitary adenylate cyclase-activating polypeptide (ADCYAP1/PACAP). Binds VIP and both PACAP27 and PACAP38 bioactive peptides with the following order of potency PACAP38 = VIP &gt; PACAP27. Ligand binding causes a conformation change that triggers signaling via guanine nucleotide-binding proteins (G proteins) and modulates the activity of downstream effectors. Activates cAMP-dependent pathway. May be coupled to phospholipase C. This Homo sapiens (Human) protein is Vasoactive intestinal polypeptide receptor 2.